We begin with the raw amino-acid sequence, 468 residues long: Ribulose bisphosphate carboxylase large chain (468 aa).

K5 is modified (N6,N6,N6-trimethyllysine). 2 residues coordinate substrate: N114 and T164. Catalysis depends on K166, which acts as the Proton acceptor. K168 contributes to the substrate binding site. Mg(2+) contacts are provided by K192, D194, and E195. Position 192 is an N6-carboxylysine (K192). The active-site Proton acceptor is the H285. R286, H318, and S370 together coordinate substrate.

It belongs to the RuBisCO large chain family. Type I subfamily. As to quaternary structure, heterohexadecamer of 8 large chains and 8 small chains; disulfide-linked. The disulfide link is formed within the large subunit homodimers. The cofactor is Mg(2+). The disulfide bond which can form in the large chain dimeric partners within the hexadecamer appears to be associated with oxidative stress and protein turnover.

The protein localises to the plastid. Its subcellular location is the chloroplast. It carries out the reaction 2 (2R)-3-phosphoglycerate + 2 H(+) = D-ribulose 1,5-bisphosphate + CO2 + H2O. The enzyme catalyses D-ribulose 1,5-bisphosphate + O2 = 2-phosphoglycolate + (2R)-3-phosphoglycerate + 2 H(+). In terms of biological role, ruBisCO catalyzes two reactions: the carboxylation of D-ribulose 1,5-bisphosphate, the primary event in carbon dioxide fixation, as well as the oxidative fragmentation of the pentose substrate in the photorespiration process. Both reactions occur simultaneously and in competition at the same active site. The polypeptide is Ribulose bisphosphate carboxylase large chain (Datura stramonium (Jimsonweed)).